The primary structure comprises 409 residues: uncharacterized protein (409 aa).

The next 4 helical transmembrane spans lie at 20–40, 283–303, 344–364, and 372–392; these read ILTM…VSML, FALL…IGVM, IGGI…TVIF, and IPAV…FGLL.

This sequence belongs to the ABC-4 integral membrane protein family.

It is found in the cell membrane. This is an uncharacterized protein from Bacillus subtilis (strain 168).